A 258-amino-acid chain; its full sequence is MNSILERIAKHKLEEVAVAKKNKPLHVLSKQQPGEMRDFITALKSNTSPAVIAEIKKASPSKGLIRKDFNVAEIAKIYTQNGARCLSVLTDIEFFQGHPDYLALAKSKTTLPVLRKDFIIDSYQIYESLVLGADCILLIVALLDDVQLMDFCQLAQELKMSVLVESHTQDELERALRLPTPLIGINNRSLHNFKTDIQLSIQLKQFVPKDKIIITESGINTREDIKLMQSHGINAFLIGESLMRADNIGKALQKLMTD.

Belongs to the TrpC family.

The enzyme catalyses 1-(2-carboxyphenylamino)-1-deoxy-D-ribulose 5-phosphate + H(+) = (1S,2R)-1-C-(indol-3-yl)glycerol 3-phosphate + CO2 + H2O. Its pathway is amino-acid biosynthesis; L-tryptophan biosynthesis; L-tryptophan from chorismate: step 4/5. In Legionella pneumophila (strain Paris), this protein is Indole-3-glycerol phosphate synthase.